We begin with the raw amino-acid sequence, 601 residues long: Elongation factor 4 (601 aa).

The tr-type G domain occupies 4-186; sequence SFIRNFAIIA…SIVHLVPPPK (183 aa). GTP is bound by residues 16–21 and 133–136; these read DHGKST and NKID.

The protein belongs to the TRAFAC class translation factor GTPase superfamily. Classic translation factor GTPase family. LepA subfamily.

It localises to the cell inner membrane. It catalyses the reaction GTP + H2O = GDP + phosphate + H(+). Its function is as follows. Required for accurate and efficient protein synthesis under certain stress conditions. May act as a fidelity factor of the translation reaction, by catalyzing a one-codon backward translocation of tRNAs on improperly translocated ribosomes. Back-translocation proceeds from a post-translocation (POST) complex to a pre-translocation (PRE) complex, thus giving elongation factor G a second chance to translocate the tRNAs correctly. Binds to ribosomes in a GTP-dependent manner. This Koribacter versatilis (strain Ellin345) protein is Elongation factor 4.